A 416-amino-acid polypeptide reads, in one-letter code: Phosphoglycerate kinase (416 aa).

Residues V23, D24, F25, N26, Q39, R40, S63, H64, G66, R67, L122, R123, H170, and R171 each contribute to the (2R)-3-phosphoglycerate site. G214 lines the ADP pocket. Residue G214 coordinates CDP. Positions 215 and 216 each coordinate AMP. ATP is bound at residue A215. A215 is a binding site for Mg(2+). Residue D219 participates in CDP binding. Mg(2+) is bound at residue D219. K220 contacts AMP. K220 lines the ATP pocket. ADP is bound at residue G238. G238 is a binding site for CDP. The AMP site is built by G239 and G312. Residues G239 and G312 each contribute to the ATP site. Residues G337, A339, and F342 each contribute to the CDP site. Position 342 (F342) interacts with ADP. An AMP-binding site is contributed by E343. The ATP site is built by E343, D374, and T375. D374 is a binding site for Mg(2+).

This sequence belongs to the phosphoglycerate kinase family. In terms of assembly, monomer. Mg(2+) serves as cofactor.

It localises to the cytoplasm. It is found in the mitochondrion. The catalysed reaction is (2R)-3-phosphoglycerate + ATP = (2R)-3-phospho-glyceroyl phosphate + ADP. It participates in carbohydrate degradation; glycolysis; pyruvate from D-glyceraldehyde 3-phosphate: step 2/5. Its function is as follows. Catalyzes one of the two ATP producing reactions in the glycolytic pathway via the reversible conversion of 1,3-diphosphoglycerate to 3-phosphoglycerate. Both L- and D- forms of purine and pyrimidine nucleotides can be used as substrates, but the activity is much lower on pyrimidines. Negatively regulates the biosynthesis of acetyl-CoA from pyruvate in the mitochondrion. This chain is Phosphoglycerate kinase (pgk1), found in Hypocrea jecorina (Trichoderma reesei).